We begin with the raw amino-acid sequence, 533 residues long: AAA-ATPase At5g17740 (533 aa).

Residues 11-27 traverse the membrane as a helical segment; it reads ASMFSTYASMMGYVMII. ATP is bound at residue 252–259; it reads GPPGTGKS.

Belongs to the AAA ATPase family. BCS1 subfamily. The cofactor is Mg(2+).

The protein localises to the membrane. It catalyses the reaction ATP + H2O = ADP + phosphate + H(+). The chain is AAA-ATPase At5g17740 from Arabidopsis thaliana (Mouse-ear cress).